Consider the following 390-residue polypeptide: 5-hydroxytryptamine receptor 1B (390 aa).

Residues 1 to 46 (MEEPGAQCAPPLAAGSQIAVPQANLSAAHSHNCSAEGYIYQDSIAL) lie on the Extracellular side of the membrane. Residues N24 and N32 are each glycosylated (N-linked (GlcNAc...) asparagine). Residues 47–72 (PWKVLLVLLLALFTLATTLSNAFVVA) form a helical membrane-spanning segment. At 73-86 (TVYRTRKLHTPANY) the chain is on the cytoplasmic side. Residues 87 to 111 (LIASLAVTDLLVSILVMPISTMYTV) traverse the membrane as a helical segment. The Extracellular segment spans residues 112–119 (TGRWTLGQ). A helical membrane pass occupies residues 120–145 (VVCDLWLSSDITCCTASIMHLCVIAL). C122 and C199 are joined by a disulfide. 2 residues coordinate ergotamine: D129 and T134. A DRY motif; important for ligand-induced conformation changes and signaling motif is present at residues 146 to 148 (DRY). At 146-165 (DRYWAITDAVEYSAKRTPKR) the chain is on the cytoplasmic side. Residues 166 to 184 (AAIMIRLVWVFSICISLPP) form a helical membrane-spanning segment. The Extracellular portion of the chain corresponds to 185–205 (FFWRQAKAEEEVSECLVNTDH). V201 is a binding site for ergotamine. Residues 206 to 229 (VLYTVYSTVGAFYLPTLLLIALYG) traverse the membrane as a helical segment. The Cytoplasmic portion of the chain corresponds to 230–315 (RIYVEARSRI…AARERKATKT (86 aa)). Over residues 260–272 (SPGSTTSVTSINS) the composition is skewed to polar residues. Residues 260–282 (SPGSTTSVTSINSRAPDVPSESG) form a disordered region. A helical transmembrane segment spans residues 316 to 337 (LGIILGVFIVCWLPFFIISLVM). Over 338–347 (PICKDACWFH) the chain is Extracellular. A helical transmembrane segment spans residues 348–370 (QAIFDFFTWLGYVNSLINPIIYT). Residues 365 to 369 (NPIIY) carry the NPxxY motif; important for ligand-induced conformation changes and signaling motif. Residues 371-390 (MSNEDFKQAFHKLIRFKCTS) lie on the Cytoplasmic side of the membrane. A lipid anchor (S-palmitoyl cysteine) is attached at C388.

Belongs to the G-protein coupled receptor 1 family. In terms of assembly, homodimer. Heterodimer with HTR1D. In terms of processing, phosphorylated. Desensitization of the receptor may be mediated by its phosphorylation. Palmitoylated.

It is found in the cell membrane. In terms of biological role, G-protein coupled receptor for 5-hydroxytryptamine (serotonin). Also functions as a receptor for ergot alkaloid derivatives, various anxiolytic and antidepressant drugs and other psychoactive substances, such as lysergic acid diethylamide (LSD). Ligand binding causes a conformation change that triggers signaling via guanine nucleotide-binding proteins (G proteins) and modulates the activity of downstream effectors, such as adenylate cyclase. HTR1B is coupled to G(i)/G(o) G alpha proteins and mediates inhibitory neurotransmission by inhibiting adenylate cyclase activity. Arrestin family members inhibit signaling via G proteins and mediate activation of alternative signaling pathways. Regulates the release of 5-hydroxytryptamine, dopamine and acetylcholine in the brain, and thereby affects neural activity, nociceptive processing, pain perception, mood and behavior. Besides, plays a role in vasoconstriction of cerebral arteries. In Oryctolagus cuniculus (Rabbit), this protein is 5-hydroxytryptamine receptor 1B (HTR1B).